The chain runs to 143 residues: uncharacterized protein (143 aa).

This is an uncharacterized protein from Archaeoglobus fulgidus (strain ATCC 49558 / DSM 4304 / JCM 9628 / NBRC 100126 / VC-16).